The sequence spans 160 residues: Ureidoglycolate lyase (160 aa).

This sequence belongs to the ureidoglycolate lyase family. As to quaternary structure, homodimer. It depends on Ni(2+) as a cofactor.

The catalysed reaction is (S)-ureidoglycolate = urea + glyoxylate. It participates in nitrogen metabolism; (S)-allantoin degradation. Functionally, catalyzes the catabolism of the allantoin degradation intermediate (S)-ureidoglycolate, generating urea and glyoxylate. Involved in the anaerobic utilization of allantoin as sole nitrogen source. Reinforces the induction of genes involved in the degradation of allantoin and glyoxylate by producing glyoxylate. The chain is Ureidoglycolate lyase from Escherichia coli (strain K12 / MC4100 / BW2952).